We begin with the raw amino-acid sequence, 296 residues long: HTH-type transcriptional regulator IlvR (296 aa).

One can recognise an HTH lysR-type domain in the interval 1–58 (MDIRQFRHFAAVAETLHFGRAAERLGITQPPLSQSIQALEKALGAPLFARTKRHVELT). A DNA-binding region (H-T-H motif) is located at residues 18-37 (FGRAAERLGITQPPLSQSIQ).

This sequence belongs to the LysR transcriptional regulatory family.

Positively regulates the expression of the ilvD gene while negatively autoregulating its own expression. This is HTH-type transcriptional regulator IlvR (ilvR) from Caulobacter vibrioides (strain ATCC 19089 / CIP 103742 / CB 15) (Caulobacter crescentus).